Here is a 416-residue protein sequence, read N- to C-terminus: MENNNVPKHLYFYSVGLSYKKADAEVRGQFSLDAVAKTRLLEQAKNDGIESLLVTSTCNRTEIYGFAEHPFQLIKLICDNSNGSVDAFQKVGFVYKNQEAINHMFRVGTGLDSQILGDFEIISQIKTSFTHSKSMGLANAFMERLVNAVIQASKRIKTETEISSGATSVSFASVQYILKNVEDISNKNILLFGTGKIGRNTCENLVKHTKNEHITLINRTKDKAEKLAGKLNLIVKDYSELHLELQKADVVVVATGAQNPTVDKAILNLKKPLLILDLSIPKNVNENVEELEGVTLIHMDYLSQLTDETLENRKLHIPAAEAIIEEIKEEFVTWMKGRKFAPTINALKEKLNAIKASELDFQSKKIADFNEEQAEIISNRIIQKITTHFANHLKDDDTMVDESIEWIEKVFKIKAS.

Residues 57-60 (TCNR), S113, 118-120 (DFE), and Q124 each bind substrate. C58 serves as the catalytic Nucleophile. 193-198 (GTGKIG) contributes to the NADP(+) binding site.

The protein belongs to the glutamyl-tRNA reductase family. Homodimer.

The catalysed reaction is (S)-4-amino-5-oxopentanoate + tRNA(Glu) + NADP(+) = L-glutamyl-tRNA(Glu) + NADPH + H(+). It functions in the pathway porphyrin-containing compound metabolism; protoporphyrin-IX biosynthesis; 5-aminolevulinate from L-glutamyl-tRNA(Glu): step 1/2. In terms of biological role, catalyzes the NADPH-dependent reduction of glutamyl-tRNA(Glu) to glutamate 1-semialdehyde (GSA). This chain is Glutamyl-tRNA reductase 1, found in Flavobacterium johnsoniae (strain ATCC 17061 / DSM 2064 / JCM 8514 / BCRC 14874 / CCUG 350202 / NBRC 14942 / NCIMB 11054 / UW101) (Cytophaga johnsonae).